Here is a 486-residue protein sequence, read N- to C-terminus: Chromosomal replication initiator protein DnaA (486 aa).

Residues 1-79 form a domain I, interacts with DnaA modulators region; sequence MEKSKNIWSL…GYNNIVIVFT (79 aa). The interval 79–141 is domain II; sequence TNQPPKTHSN…EEEPTNFKNP (63 aa). The domain III, AAA+ region stretch occupies residues 142–358; sequence FLKKRYTFEN…AAVTKLKAYI (217 aa). Glycine 186, glycine 188, lysine 189, and threonine 190 together coordinate ATP. The segment at 359 to 486 is domain IV, binds dsDNA; the sequence is DLDNIEIDIE…TELMNKIKKN (128 aa).

It belongs to the DnaA family. Oligomerizes as a right-handed, spiral filament on DNA at oriC.

It localises to the cytoplasm. Functionally, plays an essential role in the initiation and regulation of chromosomal replication. ATP-DnaA binds to the origin of replication (oriC) to initiate formation of the DNA replication initiation complex once per cell cycle. Binds the DnaA box (a 9 base pair repeat at the origin) and separates the double-stranded (ds)DNA. Forms a right-handed helical filament on oriC DNA; dsDNA binds to the exterior of the filament while single-stranded (ss)DNA is stabiized in the filament's interior. The ATP-DnaA-oriC complex binds and stabilizes one strand of the AT-rich DNA unwinding element (DUE), permitting loading of DNA polymerase. After initiation quickly degrades to an ADP-DnaA complex that is not apt for DNA replication. Binds acidic phospholipids. Binds to the bpuR promoter, possibly at 5'-TTTTTAAA-3'. The sequence is that of Chromosomal replication initiator protein DnaA from Borreliella burgdorferi (strain ATCC 35210 / DSM 4680 / CIP 102532 / B31) (Borrelia burgdorferi).